The following is a 277-amino-acid chain: 3-methyl-2-oxobutanoate hydroxymethyltransferase (277 aa).

Mg(2+)-binding residues include Asp-42 and Asp-81. 3-methyl-2-oxobutanoate-binding positions include 42 to 43 (DS), Asp-81, and Lys-110. Glu-112 provides a ligand contact to Mg(2+). The active-site Proton acceptor is the Glu-179.

This sequence belongs to the PanB family. As to quaternary structure, homodecamer; pentamer of dimers. Requires Mg(2+) as cofactor.

It localises to the cytoplasm. The catalysed reaction is 3-methyl-2-oxobutanoate + (6R)-5,10-methylene-5,6,7,8-tetrahydrofolate + H2O = 2-dehydropantoate + (6S)-5,6,7,8-tetrahydrofolate. It participates in cofactor biosynthesis; (R)-pantothenate biosynthesis; (R)-pantoate from 3-methyl-2-oxobutanoate: step 1/2. Functionally, catalyzes the reversible reaction in which hydroxymethyl group from 5,10-methylenetetrahydrofolate is transferred onto alpha-ketoisovalerate to form ketopantoate. The polypeptide is 3-methyl-2-oxobutanoate hydroxymethyltransferase (Anaplasma marginale (strain St. Maries)).